Reading from the N-terminus, the 376-residue chain is Succinyl-diaminopimelate desuccinylase (376 aa).

A Zn(2+)-binding site is contributed by His-66. Residue Asp-68 is part of the active site. Residue Asp-99 participates in Zn(2+) binding. The active-site Proton acceptor is the Glu-133. Zn(2+) contacts are provided by Glu-134, Glu-162, and His-349.

Belongs to the peptidase M20A family. DapE subfamily. In terms of assembly, homodimer. The cofactor is Zn(2+). It depends on Co(2+) as a cofactor.

It carries out the reaction N-succinyl-(2S,6S)-2,6-diaminopimelate + H2O = (2S,6S)-2,6-diaminopimelate + succinate. It participates in amino-acid biosynthesis; L-lysine biosynthesis via DAP pathway; LL-2,6-diaminopimelate from (S)-tetrahydrodipicolinate (succinylase route): step 3/3. In terms of biological role, catalyzes the hydrolysis of N-succinyl-L,L-diaminopimelic acid (SDAP), forming succinate and LL-2,6-diaminopimelate (DAP), an intermediate involved in the bacterial biosynthesis of lysine and meso-diaminopimelic acid, an essential component of bacterial cell walls. In Ruthia magnifica subsp. Calyptogena magnifica, this protein is Succinyl-diaminopimelate desuccinylase.